The sequence spans 341 residues: MKFLDQAKVYIRSGNGGSGAVSFRREKFIEFGGPDGGNGGRGGDVWALVVDGLNTLIDYRYQQHFKAKTGGHGKGRNMTGEKGGDVILKVPVGTQIFEEDNTTLICDLTEVGQRYRLAKGGNGGFGNLHFTTSTNRAPRRANPGLAGEERAIWLRLKLIADAGLVGLPNAGKSTFLSSVTAAKPKVADYPFTTLHPHLGVVRIDGREFVLADIPGLIEGAHEGVGIGDRFLGHVERCRVLLHLISAQEEDVAKAYQIVRHELEAYGNNLSDKTEIVALSQIDTLTIEERKMKQKALRRVTDQPVMMFSAVSREGLENVLRAGAHIIEMSRKEEMGGDSRID.

An Obg domain is found at 1 to 159; sequence MKFLDQAKVY…RAIWLRLKLI (159 aa). The OBG-type G domain occupies 160–327; that stretch reads ADAGLVGLPN…VLRAGAHIIE (168 aa). GTP-binding positions include 166–173, 191–195, 212–215, 279–282, and 308–310; these read GLPNAGKS, FTTLH, DIPG, SQID, and SAV. Residues Ser173 and Thr193 each contribute to the Mg(2+) site.

This sequence belongs to the TRAFAC class OBG-HflX-like GTPase superfamily. OBG GTPase family. Monomer. Mg(2+) is required as a cofactor.

It is found in the cytoplasm. An essential GTPase which binds GTP, GDP and possibly (p)ppGpp with moderate affinity, with high nucleotide exchange rates and a fairly low GTP hydrolysis rate. Plays a role in control of the cell cycle, stress response, ribosome biogenesis and in those bacteria that undergo differentiation, in morphogenesis control. This is GTPase Obg from Bartonella tribocorum (strain CIP 105476 / IBS 506).